The following is a 161-amino-acid chain: Ubiquitin-conjugating enzyme E2Q-like protein 1 (161 aa).

The UBC core domain occupies Met-1 to Val-154. Cys-88 (glycyl thioester intermediate) is an active-site residue.

This sequence belongs to the ubiquitin-conjugating enzyme family. In terms of assembly, interacts with FBXW7.

It is found in the nucleus. It catalyses the reaction S-ubiquitinyl-[E1 ubiquitin-activating enzyme]-L-cysteine + [E2 ubiquitin-conjugating enzyme]-L-cysteine = [E1 ubiquitin-activating enzyme]-L-cysteine + S-ubiquitinyl-[E2 ubiquitin-conjugating enzyme]-L-cysteine.. The protein operates within protein modification; protein ubiquitination. Functionally, probable E2 ubiquitin-protein ligase that catalyzes the covalent attachment of ubiquitin to target proteins. May facilitate the monoubiquitination and degradation of MTOR and CCNE1 through interaction with FBXW7. This Homo sapiens (Human) protein is Ubiquitin-conjugating enzyme E2Q-like protein 1 (UBE2QL1).